We begin with the raw amino-acid sequence, 77 residues long: MDPIITAEITGNIATVGYGLAAIGPGIGVGIVAGKTVEAMARQPEMAGSLRTTMFLGIAFSEALALIGLATYFIFTN.

2 helical membrane passes run 13-33 (IATVGYGLAAIGPGIGVGIVA) and 55-75 (FLGIAFSEALALIGLATYFIF).

Belongs to the ATPase C chain family. In terms of assembly, F-type ATPases have 2 components, F(1) - the catalytic core - and F(0) - the membrane proton channel. F(1) has five subunits: alpha(3), beta(3), gamma(1), delta(1), epsilon(1). F(0) has three main subunits: a(1), b(2) and c(10-14). The alpha and beta chains form an alternating ring which encloses part of the gamma chain. F(1) is attached to F(0) by a central stalk formed by the gamma and epsilon chains, while a peripheral stalk is formed by the delta and b chains.

It is found in the cell membrane. F(1)F(0) ATP synthase produces ATP from ADP in the presence of a proton or sodium gradient. F-type ATPases consist of two structural domains, F(1) containing the extramembraneous catalytic core and F(0) containing the membrane proton channel, linked together by a central stalk and a peripheral stalk. During catalysis, ATP synthesis in the catalytic domain of F(1) is coupled via a rotary mechanism of the central stalk subunits to proton translocation. In terms of biological role, key component of the F(0) channel; it plays a direct role in translocation across the membrane. A homomeric c-ring of between 10-14 subunits forms the central stalk rotor element with the F(1) delta and epsilon subunits. The chain is ATP synthase subunit c from Clavibacter sepedonicus (Clavibacter michiganensis subsp. sepedonicus).